Consider the following 125-residue polypeptide: Transposase for transposon Tn554 (125 aa).

Its function is as follows. One of three proteins encoded by transposon Tn554 required for its transposition. The chain is Transposase for transposon Tn554 (tnpC1) from Staphylococcus aureus (strain Mu50 / ATCC 700699).